A 214-amino-acid chain; its full sequence is Ribosomal RNA large subunit methyltransferase E (214 aa).

S-adenosyl-L-methionine is bound by residues Gly60, Trp62, Asp86, Asp102, and Asp127. Residue Lys167 is the Proton acceptor of the active site.

It belongs to the class I-like SAM-binding methyltransferase superfamily. RNA methyltransferase RlmE family.

It is found in the cytoplasm. The catalysed reaction is uridine(2552) in 23S rRNA + S-adenosyl-L-methionine = 2'-O-methyluridine(2552) in 23S rRNA + S-adenosyl-L-homocysteine + H(+). Functionally, specifically methylates the uridine in position 2552 of 23S rRNA at the 2'-O position of the ribose in the fully assembled 50S ribosomal subunit. This chain is Ribosomal RNA large subunit methyltransferase E, found in Janthinobacterium sp. (strain Marseille) (Minibacterium massiliensis).